We begin with the raw amino-acid sequence, 142 residues long: Large ribosomal subunit protein uL11 (142 aa).

It belongs to the universal ribosomal protein uL11 family. In terms of assembly, part of the ribosomal stalk of the 50S ribosomal subunit. Interacts with L10 and the large rRNA to form the base of the stalk. L10 forms an elongated spine to which L12 dimers bind in a sequential fashion forming a multimeric L10(L12)X complex. Post-translationally, one or more lysine residues are methylated.

Forms part of the ribosomal stalk which helps the ribosome interact with GTP-bound translation factors. This is Large ribosomal subunit protein uL11 from Acinetobacter baylyi (strain ATCC 33305 / BD413 / ADP1).